Reading from the N-terminus, the 550-residue chain is Hydroxylamine reductase (550 aa).

[2Fe-2S] cluster-binding residues include C3, C6, C18, and C25. 8 residues coordinate hybrid [4Fe-2O-2S] cluster: H249, E273, C317, C405, C433, C458, E492, and K494. Cysteine persulfide is present on C405.

Belongs to the HCP family. The cofactor is [2Fe-2S] cluster. It depends on hybrid [4Fe-2O-2S] cluster as a cofactor.

It localises to the cytoplasm. It catalyses the reaction A + NH4(+) + H2O = hydroxylamine + AH2 + H(+). Functionally, catalyzes the reduction of hydroxylamine to form NH(3) and H(2)O. In Escherichia fergusonii (strain ATCC 35469 / DSM 13698 / CCUG 18766 / IAM 14443 / JCM 21226 / LMG 7866 / NBRC 102419 / NCTC 12128 / CDC 0568-73), this protein is Hydroxylamine reductase.